The chain runs to 556 residues: Testis-specific protein 10-interacting protein (556 aa).

Positions 1–20 (MGQETNMLNAHQQLVRTSSG) are enriched in polar residues. Disordered regions lie at residues 1–102 (MGQE…SPRK) and 180–320 (CTSI…GPWD). A compositionally biased stretch (basic residues) spans 75–85 (KDRRLRGRNKK). Composition is skewed to acidic residues over residues 213 to 225 (EPEESEPEGLGAE) and 246 to 260 (LEEEQFSEATEEAED). Basic residues predominate over residues 266–278 (PWRRRTSSRRKGR). Residues 304–320 (EPQRRKPRAKELEGPWD) are compositionally biased toward basic and acidic residues. Residues 387–463 (LRAWELQQRE…ELQGIQHRVQ (77 aa)) adopt a coiled-coil conformation. The interval 503–556 (AGKRDMEGAPRRHRSHRSVGARMEPSSQSPPKMEPTGSQADQHFAPNPDQELSP) is disordered. Residues 527-543 (PSSQSPPKMEPTGSQAD) are compositionally biased toward polar residues.

This Bos taurus (Bovine) protein is Testis-specific protein 10-interacting protein (TSGA10IP).